We begin with the raw amino-acid sequence, 910 residues long: Constitutive coactivator of peroxisome proliferator-activated receptor gamma (910 aa).

Disordered regions lie at residues 333–416, 443–483, and 863–910; these read SDAE…VPMC, SEPR…ESRQ, and SHHA…WRRY. Composition is skewed to basic and acidic residues over residues 335 to 351, 360 to 375, and 396 to 411; these read AESR…ESRQ and ESRR…EPRQ. Residues 872 to 890 are compositionally biased toward polar residues; it reads QGSSYHRTGSGYSRSSQGQ. Omega-N-methylarginine is present on R885. Positions 901 to 910 are enriched in basic and acidic residues; sequence QYEHDQWRRY.

Belongs to the constitutive coactivator of PPAR-gamma family. In terms of assembly, interacts with ESR1 and RXRA. Interacts with PPARG; in a ligand-independent manner. In terms of tissue distribution, widely expressed.

It localises to the nucleus. Functions as a transactivator of PPARG and ESR1. Functions in adipogenesis through PPARG activation. In Homo sapiens (Human), this protein is Constitutive coactivator of peroxisome proliferator-activated receptor gamma (FAM120B).